A 775-amino-acid polypeptide reads, in one-letter code: Ubiquitin carboxyl-terminal hydrolase 14 (775 aa).

A UBP-type 1; degenerate zinc finger spans residues 1–108 (MSCPHLTETN…EDLYDYFYVP (108 aa)). Zn(2+)-binding residues include C25, C28, C41, C44, C49, H56, H60, H66, C153, H155, C174, C177, C186, C189, C194, H207, H211, H217, C236, and C239. The UBP-type 2 zinc finger occupies 151–259 (TTCDHIINLP…THMLNFGIDI (109 aa)). Positions 300–774 (TGLKNLGNSC…TGYVYLFERL (475 aa)) constitute a USP domain. The Nucleophile role is filled by C309. The residue at position 456 (S456) is a Phosphoserine. 2 UBA domains span residues 576–617 (EWNQ…LFEH) and 639–679 (SVSE…ILNH). H730 functions as the Proton acceptor in the catalytic mechanism.

It belongs to the peptidase C19 family.

It carries out the reaction Thiol-dependent hydrolysis of ester, thioester, amide, peptide and isopeptide bonds formed by the C-terminal Gly of ubiquitin (a 76-residue protein attached to proteins as an intracellular targeting signal).. The polypeptide is Ubiquitin carboxyl-terminal hydrolase 14 (ubp14) (Schizosaccharomyces pombe (strain 972 / ATCC 24843) (Fission yeast)).